We begin with the raw amino-acid sequence, 2368 residues long: Serine/threonine-protein kinase MEC1 (2368 aa).

Positions 1399 to 1944 (LLAQRSLETD…LWYITALVNS (546 aa)) constitute an FAT domain. One can recognise a PI3K/PI4K catalytic domain in the interval 2049-2352 (FGSSYKVFSS…QTETLIQEAT (304 aa)). Residues 2055-2061 (VFSSLKK) are G-loop. The binding to the RPA complex stretch occupies residues 2140-2368 (SILSTKYESL…KMYIGWLPFW (229 aa)). Positions 2221–2229 (GLGDRHCEN) are catalytic loop. The interval 2241–2265 (HVDFDCLFEKGKRLPVPEIVPFRLT) is activation loop. One can recognise an FATC domain in the interval 2336 to 2368 (LVLSVAGQTETLIQEATSEDNLSKMYIGWLPFW).

It belongs to the PI3/PI4-kinase family. ATM subfamily. Interacts with LCD1, which is required for localization MEC1 to the RPA complex. Interacts directly with the RPA subunits RFA1 and RFA2.

Its subcellular location is the nucleus. The enzyme catalyses L-seryl-[protein] + ATP = O-phospho-L-seryl-[protein] + ADP + H(+). The catalysed reaction is L-threonyl-[protein] + ATP = O-phospho-L-threonyl-[protein] + ADP + H(+). Serine/threonine protein kinase which activates checkpoint signaling upon genotoxic stresses such as ionizing radiation (IR), ultraviolet light (UV), or DNA replication stalling, thereby acting as a DNA damage sensor. Recognizes the substrate consensus sequence [ST]-Q. Recruited in complex with protein LCD1 by the single-strand-binding protein complex RPA to DNA lesions in order to initiate the DNA repair by homologous recombination, after the MRX-complex and TEL1 are displaced. Phosphorylates LCD1 and RPA2, a subunit of RPA, involved in DNA replication, repair and recombination. Phosphorylates RAD9, CHK1 and RAD53, which leads to the activation of the CHK1 and RAD53 kinases involved in DNA damage repair cascade. Phosphorylates histone H2A to form H2AS128ph (gamma-H2A) at sites of DNA damage, also involved in the regulation of DNA damage response mechanism. Also phosphorylates SLX4 and RTT107 which are proteins involved in genome stability. Required for cell growth and meiotic recombination. This chain is Serine/threonine-protein kinase MEC1 (MEC1), found in Saccharomyces cerevisiae (strain ATCC 204508 / S288c) (Baker's yeast).